The sequence spans 126 residues: MILGIGIDTVEISRFQRFLDEDNQALLNRLFAPAEQEYCRPRKQAASCLAARFAAKEAFVKALGTGLRDGICWTEIAVGNDQLGKPFLKLSGRALQLFSEQGAASAHLSLSHDGGHAVAQVILEAP.

2 residues coordinate Mg(2+): D8 and E57.

It belongs to the P-Pant transferase superfamily. AcpS family. Requires Mg(2+) as cofactor.

It localises to the cytoplasm. The enzyme catalyses apo-[ACP] + CoA = holo-[ACP] + adenosine 3',5'-bisphosphate + H(+). Its function is as follows. Transfers the 4'-phosphopantetheine moiety from coenzyme A to a Ser of acyl-carrier-protein. This chain is Holo-[acyl-carrier-protein] synthase, found in Trichlorobacter lovleyi (strain ATCC BAA-1151 / DSM 17278 / SZ) (Geobacter lovleyi).